The chain runs to 298 residues: Lipoyl synthase (298 aa).

7 residues coordinate [4Fe-4S] cluster: Cys40, Cys45, Cys51, Cys67, Cys71, Cys74, and Ser280. One can recognise a Radical SAM core domain in the interval 53–269; sequence AVRRTATFMI…KEIAMQKGFS (217 aa).

Belongs to the radical SAM superfamily. Lipoyl synthase family. Requires [4Fe-4S] cluster as cofactor.

It is found in the cytoplasm. It carries out the reaction [[Fe-S] cluster scaffold protein carrying a second [4Fe-4S](2+) cluster] + N(6)-octanoyl-L-lysyl-[protein] + 2 oxidized [2Fe-2S]-[ferredoxin] + 2 S-adenosyl-L-methionine + 4 H(+) = [[Fe-S] cluster scaffold protein] + N(6)-[(R)-dihydrolipoyl]-L-lysyl-[protein] + 4 Fe(3+) + 2 hydrogen sulfide + 2 5'-deoxyadenosine + 2 L-methionine + 2 reduced [2Fe-2S]-[ferredoxin]. The protein operates within protein modification; protein lipoylation via endogenous pathway; protein N(6)-(lipoyl)lysine from octanoyl-[acyl-carrier-protein]. Catalyzes the radical-mediated insertion of two sulfur atoms into the C-6 and C-8 positions of the octanoyl moiety bound to the lipoyl domains of lipoate-dependent enzymes, thereby converting the octanoylated domains into lipoylated derivatives. The sequence is that of Lipoyl synthase from Bacillus subtilis (strain 168).